The sequence spans 257 residues: NH(3)-dependent NAD(+) synthetase (257 aa).

40–47 (GISGGIDS) provides a ligand contact to ATP. Position 46 (Asp-46) interacts with Mg(2+). Arg-121 provides a ligand contact to deamido-NAD(+). Residue Thr-141 coordinates ATP. Glu-146 lines the Mg(2+) pocket. Residues Lys-154 and Asp-161 each contribute to the deamido-NAD(+) site. Lys-170 and Ser-192 together coordinate ATP. 238 to 239 (HK) lines the deamido-NAD(+) pocket.

It belongs to the NAD synthetase family. In terms of assembly, homodimer.

The catalysed reaction is deamido-NAD(+) + NH4(+) + ATP = AMP + diphosphate + NAD(+) + H(+). It functions in the pathway cofactor biosynthesis; NAD(+) biosynthesis; NAD(+) from deamido-NAD(+) (ammonia route): step 1/1. Its function is as follows. Catalyzes the ATP-dependent amidation of deamido-NAD to form NAD. Uses ammonia as a nitrogen source. The sequence is that of NH(3)-dependent NAD(+) synthetase from Mycoplasmopsis pulmonis (strain UAB CTIP) (Mycoplasma pulmonis).